The following is a 202-amino-acid chain: Small ribosomal subunit protein uS4c (202 aa).

Residues M90–I153 form the S4 RNA-binding domain.

This sequence belongs to the universal ribosomal protein uS4 family. As to quaternary structure, part of the 30S ribosomal subunit. Contacts protein S5. The interaction surface between S4 and S5 is involved in control of translational fidelity.

The protein localises to the plastid. It localises to the chloroplast. In terms of biological role, one of the primary rRNA binding proteins, it binds directly to 16S rRNA where it nucleates assembly of the body of the 30S subunit. Functionally, with S5 and S12 plays an important role in translational accuracy. This chain is Small ribosomal subunit protein uS4c (rps4), found in Hylocomium splendens (Glittering wood-moss).